A 113-amino-acid polypeptide reads, in one-letter code: Cysteine proteinase inhibitor 6 (113 aa).

The first 18 residues, 1 to 18 (MAMTTRTLLLAAVCAAAA), serve as a signal peptide directing secretion. Positions 65-69 (QVVSG) match the Secondary area of contact motif.

Belongs to the cystatin family. Phytocystatin subfamily.

Its subcellular location is the secreted. Specific inhibitor of cysteine proteinases. Probably involved in the regulation of endogenous processes and in defense against pests and pathogens. This chain is Cysteine proteinase inhibitor 6, found in Oryza sativa subsp. japonica (Rice).